Consider the following 115-residue polypeptide: Large ribosomal subunit protein uL22 (115 aa).

The protein belongs to the universal ribosomal protein uL22 family. Part of the 50S ribosomal subunit.

Functionally, this protein binds specifically to 23S rRNA; its binding is stimulated by other ribosomal proteins, e.g. L4, L17, and L20. It is important during the early stages of 50S assembly. It makes multiple contacts with different domains of the 23S rRNA in the assembled 50S subunit and ribosome. In terms of biological role, the globular domain of the protein is located near the polypeptide exit tunnel on the outside of the subunit, while an extended beta-hairpin is found that lines the wall of the exit tunnel in the center of the 70S ribosome. In Wolbachia pipientis wMel, this protein is Large ribosomal subunit protein uL22 (rplV).